Here is a 732-residue protein sequence, read N- to C-terminus: Segment polarity protein dishevelled homolog DVL-2 (732 aa).

Residues 1 to 82 form the DIX domain; it reads MAETKVIYHL…RVVSWLVSSE (82 aa). 2 disordered regions span residues 81-181 and 195-237; these read SETS…SSST and EEDD…SSFS. Residues 98-111 show a composition bias toward pro residues; it reads DPPPVPPPVPPPPA. Residues 146–157 are compositionally biased toward basic and acidic residues; it reads MRRDRVRRRDST. Positions 202–213 are enriched in polar residues; it reads RFSSSTEQSSAS. Residues 215 to 227 are compositionally biased toward basic residues; that stretch reads LLKRHRRRRKQRP. In terms of domain architecture, PDZ spans 250-335; that stretch reads TVTLNMEKYN…KPGPIILTVA (86 aa). The 75-residue stretch at 424–498 folds into the DEP domain; sequence PESGLEVRDR…SEQCYYIFGD (75 aa). 3 stretches are compositionally biased toward low complexity: residues 570 to 589, 612 to 629, and 637 to 647; these read MGSA…SNRS, KSGS…SIRR, and PPSERSTSSRP. The interval 570-660 is disordered; that stretch reads MGSAGSQHSE…HPPSVHSYAA (91 aa).

This sequence belongs to the DSH family. Can form homomultimers. Interacts with prickle1. Interacts (via the PDZ domain) with ccdc88c/dal and dact1-B/dpr. Interacts (via the DIX domain) with ARP/Axin-related protein and dact1-A/frodo. Interacts with sdc4, possibly via fz7. Interacts directly (via the DEP domain) with efnb1/ephrin-B1. May interact indirectly with the phosphorylated ephrin receptors ephb1 and ephb2 via SH domain-containing adapters. In terms of processing, phosphorylated. Phosphorylation is controlled by frizzled proteins, correlates with the onset of embryo dorsalizing events and is higher in the dorsal half of early cleavage embryos. Phosphorylated on tyrosine residues in response to association with efnb1/ephrin-B1.

The protein resides in the cytoplasm. Its subcellular location is the cytoplasmic vesicle. The protein localises to the cell projection. It localises to the cilium. It is found in the nucleus. The protein resides in the cell membrane. Involved in at least 2 independent signaling cascades, controlling cell fate via canonical Wnt signaling and cell polarity via a planar cell polarity (PCP) cascade. Acts synergistically with dal/dapple-like to activate Wnt signaling, stabilizing ctnnb1/beta-catenin and leading to dorsal axis formation. Also prevents degradation of ctnnb1/beta-catenin by displacing gsk3 from a complex with ARP/Axin-related protein. Has an additional role in anterior-posterior (A/P) axis formation, specifying different neuroectodermal cell fates along the A/P axis in a dose-dependent manner by activating several early patterning genes. In the PCP pathway, required at the cell membrane for PCP-mediated neural and mesodermal convergent extension during gastrulation and subsequent neural tube closure, acting to activate jnk. Also involved in blastopore closure and archenteron elongation during early, but not late, gastrulation. Associates with ephrin receptors and ligands and acts as part of a downstream PCP pathway to mediate ephrin-mediated cell repulsion via activation of rhoa. Required for efnb1/ephrin-B1-driven movement of non-retinal progenitor cells into the retina during eye field formation. Patterns the hindbrain. Required for ciliogenesis. Controls the docking of basal bodies to the apical plasma membrane; mediates the activation, but not localization of rhoa at the apical surface of ciliated cells during basal body docking. Furthermore, required for the association of basal bodies with membrane-bound vesicles and the vesicle-trafficking protein exoc4/sec8, and this association is in turn required for basal body docking. Once basal bodies are docked, required for the planar polarization of basal bodies that underlies ciliary beating and the directional fluid flow across ciliated epithelia. This is Segment polarity protein dishevelled homolog DVL-2 from Xenopus tropicalis (Western clawed frog).